Reading from the N-terminus, the 348-residue chain is Protein RecA (348 aa).

ATP is bound at residue 65-72 (GPESSGKT). Over residues 326-336 (LLTPAEEKPET) the composition is skewed to basic and acidic residues. The disordered stretch occupies residues 326-348 (LLTPAEEKPETDAAPEIEENEEF). A compositionally biased stretch (acidic residues) spans 338–348 (AAPEIEENEEF).

This sequence belongs to the RecA family.

The protein resides in the cytoplasm. Can catalyze the hydrolysis of ATP in the presence of single-stranded DNA, the ATP-dependent uptake of single-stranded DNA by duplex DNA, and the ATP-dependent hybridization of homologous single-stranded DNAs. It interacts with LexA causing its activation and leading to its autocatalytic cleavage. This chain is Protein RecA, found in Aliivibrio fischeri (strain ATCC 700601 / ES114) (Vibrio fischeri).